We begin with the raw amino-acid sequence, 105 residues long: BLOC-1-related complex subunit 7 (105 aa).

This sequence belongs to the BORCS7 family. Component of the BLOC-one-related complex (BORC) which is composed of BLOC1S1, BLOC1S2, BORCS5, BORCS6, BORCS7, BORCS8, KXD1 and SNAPIN.

Its subcellular location is the lysosome membrane. As part of the BORC complex may play a role in lysosomes movement and localization at the cell periphery. Associated with the cytosolic face of lysosomes, the BORC complex may recruit ARL8B and couple lysosomes to microtubule plus-end-directed kinesin motor. This is BLOC-1-related complex subunit 7 from Mus musculus (Mouse).